The primary structure comprises 427 residues: Histidinol dehydrogenase (427 aa).

S232, Q254, and H257 together coordinate substrate. Zn(2+)-binding residues include Q254 and H257. Active-site proton acceptor residues include E322 and H323. Substrate is bound by residues H323, D356, E410, and H415. A Zn(2+)-binding site is contributed by D356. H415 contacts Zn(2+).

This sequence belongs to the histidinol dehydrogenase family. The cofactor is Zn(2+).

The catalysed reaction is L-histidinol + 2 NAD(+) + H2O = L-histidine + 2 NADH + 3 H(+). Its pathway is amino-acid biosynthesis; L-histidine biosynthesis; L-histidine from 5-phospho-alpha-D-ribose 1-diphosphate: step 9/9. Its function is as follows. Catalyzes the sequential NAD-dependent oxidations of L-histidinol to L-histidinaldehyde and then to L-histidine. The polypeptide is Histidinol dehydrogenase (Listeria monocytogenes serotype 4b (strain F2365)).